A 451-amino-acid chain; its full sequence is MTTSGCNPMKSSSTSNPTIGFVSLGCPKNLVDSERILTQLRMEGYNIVPSYNDADMVIVNTCGFIDSAVQESLGAIGEALNENGKVLVTGCLGAKKDEIIQVHPNVLGITGAHAYEEVLAQVHEHLPPSQTHNPFTDLVPPQGIKLTPRHYAYLKISEGCNHSCSFCIIPDMRGKLVSRPIGQVMGEAERLVKAGVKELLVISQDTSAYGVDIKHRTDFWDGRPLKTDMYQLAAALGELGVWVRLHYVYPYPHVDNVIPLMAQGKVLPYLDIPFQHASPTLLRKMRRPGQVEKTLERIKNWREQVPNLTLRSTFIVGFPGETEADFEELLGFLEEAQLDRVGCFQYSPVEGAKANELPDPVLDEIKQARYDRFMQLQQRISTERLKQKVGQTLPVLIDEVDDEGAIGRSYADAPEIDGCVYLNGDIQVKPGDIVNVQIEHSDEYDLWGTRV.

Residues 17–127 (PTIGFVSLGC…VLAQVHEHLP (111 aa)) enclose the MTTase N-terminal domain. Cys26, Cys62, Cys91, Cys160, Cys164, and Cys167 together coordinate [4Fe-4S] cluster. Residues 146–383 (LTPRHYAYLK…MQLQQRISTE (238 aa)) enclose the Radical SAM core domain. The TRAM domain maps to 386–451 (KQKVGQTLPV…DEYDLWGTRV (66 aa)).

This sequence belongs to the methylthiotransferase family. RimO subfamily. It depends on [4Fe-4S] cluster as a cofactor.

The protein resides in the cytoplasm. The enzyme catalyses L-aspartate(89)-[ribosomal protein uS12]-hydrogen + (sulfur carrier)-SH + AH2 + 2 S-adenosyl-L-methionine = 3-methylsulfanyl-L-aspartate(89)-[ribosomal protein uS12]-hydrogen + (sulfur carrier)-H + 5'-deoxyadenosine + L-methionine + A + S-adenosyl-L-homocysteine + 2 H(+). Catalyzes the methylthiolation of an aspartic acid residue of ribosomal protein uS12. The sequence is that of Ribosomal protein uS12 methylthiotransferase RimO from Cellvibrio japonicus (strain Ueda107) (Pseudomonas fluorescens subsp. cellulosa).